The primary structure comprises 151 residues: Ribosome maturation factor RimP (151 aa).

It belongs to the RimP family.

Its subcellular location is the cytoplasm. Required for maturation of 30S ribosomal subunits. The chain is Ribosome maturation factor RimP from Shewanella amazonensis (strain ATCC BAA-1098 / SB2B).